Reading from the N-terminus, the 326-residue chain is 4-hydroxythreonine-4-phosphate dehydrogenase (326 aa).

A substrate-binding site is contributed by threonine 132. 3 residues coordinate a divalent metal cation: histidine 160, histidine 205, and histidine 260. Residues lysine 268, asparagine 277, and arginine 286 each coordinate substrate.

This sequence belongs to the PdxA family. Homodimer. The cofactor is Zn(2+). It depends on Mg(2+) as a cofactor. Co(2+) serves as cofactor.

It is found in the cytoplasm. It carries out the reaction 4-(phosphooxy)-L-threonine + NAD(+) = 3-amino-2-oxopropyl phosphate + CO2 + NADH. Its pathway is cofactor biosynthesis; pyridoxine 5'-phosphate biosynthesis; pyridoxine 5'-phosphate from D-erythrose 4-phosphate: step 4/5. Its function is as follows. Catalyzes the NAD(P)-dependent oxidation of 4-(phosphooxy)-L-threonine (HTP) into 2-amino-3-oxo-4-(phosphooxy)butyric acid which spontaneously decarboxylates to form 3-amino-2-oxopropyl phosphate (AHAP). The chain is 4-hydroxythreonine-4-phosphate dehydrogenase from Stenotrophomonas maltophilia (strain R551-3).